The sequence spans 204 residues: uncharacterized protein (204 aa).

As to expression, component of the acid-soluble organic matrix of the aragonitic skeleton (at protein level).

The protein resides in the secreted. This is an uncharacterized protein from Acropora millepora (Staghorn coral).